A 350-amino-acid polypeptide reads, in one-letter code: Heme A synthase (350 aa).

The next 8 helical transmembrane spans lie at 16 to 36, 77 to 97, 101 to 121, 136 to 156, 170 to 190, 201 to 221, 265 to 285, and 299 to 321; these read LARW…VGGI, FQLV…IFFW, HRLL…WFWI, LLAL…SGIV, LLVA…LVAL, GIGL…ALVA, VFLV…VLVV, and IVLH…SGVA. Position 272 (His272) interacts with heme. His328 serves as a coordination point for heme.

Belongs to the COX15/CtaA family. Type 2 subfamily. In terms of assembly, interacts with CtaB. The cofactor is heme b.

The protein localises to the cell membrane. It catalyses the reaction Fe(II)-heme o + 2 A + H2O = Fe(II)-heme a + 2 AH2. The protein operates within porphyrin-containing compound metabolism; heme A biosynthesis; heme A from heme O: step 1/1. Catalyzes the conversion of heme O to heme A by two successive hydroxylations of the methyl group at C8. The first hydroxylation forms heme I, the second hydroxylation results in an unstable dihydroxymethyl group, which spontaneously dehydrates, resulting in the formyl group of heme A. This Novosphingobium aromaticivorans (strain ATCC 700278 / DSM 12444 / CCUG 56034 / CIP 105152 / NBRC 16084 / F199) protein is Heme A synthase.